A 324-amino-acid polypeptide reads, in one-letter code: Beta-ketoacyl-[acyl-carrier-protein] synthase III (324 aa).

Catalysis depends on residues C114 and H246. Positions 247 to 251 are ACP-binding; it reads QANLR. N276 is a catalytic residue.

Belongs to the thiolase-like superfamily. FabH family. In terms of assembly, homodimer.

The protein localises to the cytoplasm. The catalysed reaction is malonyl-[ACP] + acetyl-CoA + H(+) = 3-oxobutanoyl-[ACP] + CO2 + CoA. The protein operates within lipid metabolism; fatty acid biosynthesis. Its function is as follows. Catalyzes the condensation reaction of fatty acid synthesis by the addition to an acyl acceptor of two carbons from malonyl-ACP. Catalyzes the first condensation reaction which initiates fatty acid synthesis and may therefore play a role in governing the total rate of fatty acid production. Possesses both acetoacetyl-ACP synthase and acetyl transacylase activities. Its substrate specificity determines the biosynthesis of branched-chain and/or straight-chain of fatty acids. This is Beta-ketoacyl-[acyl-carrier-protein] synthase III from Campylobacter jejuni subsp. doylei (strain ATCC BAA-1458 / RM4099 / 269.97).